We begin with the raw amino-acid sequence, 55 residues long: Large ribosomal subunit protein bL33 (55 aa).

It belongs to the bacterial ribosomal protein bL33 family.

The polypeptide is Large ribosomal subunit protein bL33 (Beijerinckia indica subsp. indica (strain ATCC 9039 / DSM 1715 / NCIMB 8712)).